The primary structure comprises 402 residues: Deoxyguanosinetriphosphate triphosphohydrolase-like protein (402 aa).

The HD domain occupies 73–217 (RLTHTIEVAQ…AAIADDIAYN (145 aa)).

This sequence belongs to the dGTPase family. Type 2 subfamily.

The polypeptide is Deoxyguanosinetriphosphate triphosphohydrolase-like protein (Brucella anthropi (strain ATCC 49188 / DSM 6882 / CCUG 24695 / JCM 21032 / LMG 3331 / NBRC 15819 / NCTC 12168 / Alc 37) (Ochrobactrum anthropi)).